A 129-amino-acid chain; its full sequence is Small ribosomal subunit protein uS11 (129 aa).

The protein belongs to the universal ribosomal protein uS11 family. In terms of assembly, part of the 30S ribosomal subunit. Interacts with proteins S7 and S18. Binds to IF-3.

Located on the platform of the 30S subunit, it bridges several disparate RNA helices of the 16S rRNA. Forms part of the Shine-Dalgarno cleft in the 70S ribosome. The protein is Small ribosomal subunit protein uS11 of Bacillus anthracis (strain A0248).